Reading from the N-terminus, the 243-residue chain is Adenosylcobinamide-GDP ribazoletransferase (243 aa).

5 helical membrane-spanning segments follow: residues L31–L48, A61–A81, I109–I129, G134–C154, and L188–W208.

Belongs to the CobS family. Mg(2+) is required as a cofactor.

The protein localises to the cell inner membrane. It catalyses the reaction alpha-ribazole + adenosylcob(III)inamide-GDP = adenosylcob(III)alamin + GMP + H(+). The catalysed reaction is alpha-ribazole 5'-phosphate + adenosylcob(III)inamide-GDP = adenosylcob(III)alamin 5'-phosphate + GMP + H(+). It participates in cofactor biosynthesis; adenosylcobalamin biosynthesis; adenosylcobalamin from cob(II)yrinate a,c-diamide: step 7/7. Its function is as follows. Joins adenosylcobinamide-GDP and alpha-ribazole to generate adenosylcobalamin (Ado-cobalamin). Also synthesizes adenosylcobalamin 5'-phosphate from adenosylcobinamide-GDP and alpha-ribazole 5'-phosphate. In Pseudomonas fluorescens (strain ATCC BAA-477 / NRRL B-23932 / Pf-5), this protein is Adenosylcobinamide-GDP ribazoletransferase.